The sequence spans 1262 residues: MSTKFSFTPSQDQAIHQTGNNLLVSASAGSGKTRVLVQRVIERLKTGVGIDQILIVTFTKAAAAEMRERIQTALRQELAVSQGDSAQQQFYLRQLNQLPVADISTLDAFCLRLLQRYYYVIDLDPVFRLLADETENGLLRDEVWADLREDLYANDDSGLFARLTENFSGDRNDQGLADLVQQTYTFANATPNPTAWLAELPQPYQLDSDQLMTTSFYQQRLRPFFQSQLQQLQADLTSAQALANQAGLDKQAAHVTAVLENVAAVQQLVTGDSWNALRAAIQDFAWGRMPAVRKTNEDYPIYNELKTTYYDPARKQLDSLKKTYLIQDEQQAMTTIRRSGELVGELSRVVTAFRTAYRQEKQRRHVLDFADVEHAALAILTQDSDQSRQVAAQLRHQFAEIMVDEYQDTNGLQEAILTAIAEPAPQGNLFMVGDVKQSIYRFRQADPTLFMTKTDQYAADAAAGELIVLAENFRSMKNVDDFTNLIFKQLMDRELGEIDYTGAAQLKFGASYYPDTVTSTAELLVYLTEDAPESAGDADSEAMDATFQVDNKHQGEVLMVGQKIQQLIADQTPIYDREAKQVRPMTYGDITLLTPTRTNNLIITDELRRLGIPVVVNDARNYFKTTEIQIMMALLQIIDNPYQDIPLAAVLRSPIVGLNENELALLRINQRTGDYYQAVLHFQRSFVPNQASDFQQAVYQKVSHFLEQLQEFRDIAQQDELVTLIWRIYQETGFLDYVGGMPAGEQRQANLHALYERAKSYEQSSFKGLFQFVRFVERLQERDDDLAGAPVQAADDAVSVMTIHGSKGLEFPVVFIMDASRQFNKQDQQGNYVMSGKTGIGIDYLDPDSRVKAPSLQKLVTAQAISRASLAEEMRKLYVALTRAESRVYIVGSHKTQEAAISAWEQAYQSPNLVLNATLREKNTLANYLDWIGMCLVRDPKFAAELRQGTTTFSGLAGDPATFAVHFVTAHDLGPTQGVNETAVDWLQAASETAAKVTTPPVDTEQLHQIMDFRYPHQAATATTAYQSVSEAKRLFEDPDNATIGEYQASATGQVGGHRFVTHDFARPDFLQTVREPLATEIGSATHLVLQQLDVTVTPTLDRVQGVIDQLVADQVLTAEVAQRIQPELILRFFSSSVGQQVLAAPDQLHREVPFSLLMPARSLFQDFQETDSQVLVHGIIDGYLTTPAGVILFDYKTDHVNAQNQAASIEKIVERYGGQVNLYAAALKQMTGQPIVGQYLYLLAIGELVAVPEQQVRRLSE.

A UvrD-like helicase ATP-binding domain is found at 5-476 (FSFTPSQDQA…IVLAENFRSM (472 aa)). Position 26 to 33 (26 to 33 (ASAGSGKT)) interacts with ATP. The UvrD-like helicase C-terminal domain occupies 515–808 (DTVTSTAELL…SVMTIHGSKG (294 aa)).

Belongs to the helicase family. AddA subfamily. In terms of assembly, heterodimer of AddA and AddB/RexB. The cofactor is Mg(2+).

The catalysed reaction is Couples ATP hydrolysis with the unwinding of duplex DNA by translocating in the 3'-5' direction.. It carries out the reaction ATP + H2O = ADP + phosphate + H(+). Functionally, the heterodimer acts as both an ATP-dependent DNA helicase and an ATP-dependent, dual-direction single-stranded exonuclease. Recognizes the chi site generating a DNA molecule suitable for the initiation of homologous recombination. The AddA nuclease domain is required for chi fragment generation; this subunit has the helicase and 3' -&gt; 5' nuclease activities. The sequence is that of ATP-dependent helicase/nuclease subunit A from Levilactobacillus brevis (strain ATCC 367 / BCRC 12310 / CIP 105137 / JCM 1170 / LMG 11437 / NCIMB 947 / NCTC 947) (Lactobacillus brevis).